We begin with the raw amino-acid sequence, 858 residues long: Leucine--tRNA ligase (858 aa).

The 'HIGH' region signature appears at 42-52 (PYPSGRLHMGH). A 'KMSKS' region motif is present at residues 618 to 622 (KMSKS). Lys-621 is a binding site for ATP.

It belongs to the class-I aminoacyl-tRNA synthetase family.

The protein localises to the cytoplasm. It carries out the reaction tRNA(Leu) + L-leucine + ATP = L-leucyl-tRNA(Leu) + AMP + diphosphate. The polypeptide is Leucine--tRNA ligase (Vibrio atlanticus (strain LGP32) (Vibrio splendidus (strain Mel32))).